A 200-amino-acid chain; its full sequence is MRLKLTSHTCLFALSSLLVTPAFAAPSGDNTASDAVERGSEPGIWQRAGNNLSDTWHHWQSQELYVPAMTWHNRWTYDKAKTDRYNERPWGAGYGVSRLDRDGDWHSLYLMAFKDSFNKWEPIGGYGYEKRWRPLENQDVQLGLGFTAGVTMRDNWKYIPIPVLLPMASVSYQRLSFQATYIPGTHNNGNVFFAWLRWQF.

The N-terminal stretch at 1–24 is a signal peptide; that stretch reads MRLKLTSHTCLFALSSLLVTPAFA. Active-site residues include histidine 72, aspartate 115, and serine 116.

It belongs to the lipid A palmitoyltransferase family. Homodimer.

It localises to the cell outer membrane. The enzyme catalyses a lipid A + a 1,2-diacyl-sn-glycero-3-phosphocholine = a hepta-acyl lipid A + a 2-acyl-sn-glycero-3-phosphocholine. It carries out the reaction a lipid IVA + a 1,2-diacyl-sn-glycero-3-phosphocholine = a lipid IVB + a 2-acyl-sn-glycero-3-phosphocholine. The catalysed reaction is a lipid IIA + a 1,2-diacyl-sn-glycero-3-phosphocholine = a lipid IIB + a 2-acyl-sn-glycero-3-phosphocholine. Its function is as follows. Transfers a fatty acid residue from the sn-1 position of a phospholipid to the N-linked hydroxyfatty acid chain on the proximal unit of lipid A or its precursors. The protein is Lipid A acyltransferase PagP of Dickeya dadantii (strain 3937) (Erwinia chrysanthemi (strain 3937)).